Consider the following 512-residue polypeptide: MKKTTLLVILDGWGYSDSDYFNAIKNANTPTWDSIWQEFPKTLINASSLEVGLPRSQMGNSEVGHVNIGCGRVVYQELTKIDKAIEEKTFGDNKAICAAIDNVIKNDSNLHLIGLLSPGGVHSHEEHIFEMIKIAKQKGIKRLYLHAFLDGRDTPPRSAEKSIKKADKLLQDLNLGYIASVCGRYYAMDRDNRWDRVEKAYNAIVNANADFIYDSALEALEQSYARDQSDEFVIPTCIKKDGHLVKVQDNDSVIFMNFRADRAREISHAFTDESFDHFPRKKHLNINFTTLTEYDSKLKCAVAFPPEQPINTLGEVLMKNHKTQLRIAETEKYPHVTFFFNGGREEQFEGEDRILIPSPKVATYDLQPEMSAPEVTDKLVAAINSGKYDCIVCNYANSDMVGHTGNYEAAMQAIEYLDKCIARLKDAILEHDGNMFITADHGNADMMVNPETQKPHTAHTTNLVPFIYVGHKKAQVALEHGKLSDIAPTLLNVMGIAQPKEMTGKTIFNFEK.

Residues D11 and S61 each coordinate Mn(2+). The active-site Phosphoserine intermediate is S61. Residues H122, 152–153 (RD), R184, R190, 259–262 (RADR), and K332 contribute to the substrate site. Positions 399, 403, 440, 441, and 459 each coordinate Mn(2+).

Belongs to the BPG-independent phosphoglycerate mutase family. Monomer. It depends on Mn(2+) as a cofactor.

It carries out the reaction (2R)-2-phosphoglycerate = (2R)-3-phosphoglycerate. The protein operates within carbohydrate degradation; glycolysis; pyruvate from D-glyceraldehyde 3-phosphate: step 3/5. Its function is as follows. Catalyzes the interconversion of 2-phosphoglycerate and 3-phosphoglycerate. This chain is 2,3-bisphosphoglycerate-independent phosphoglycerate mutase, found in Francisella tularensis subsp. holarctica (strain FTNF002-00 / FTA).